The chain runs to 121 residues: Inner membrane protein YhaH (121 aa).

Residues 1-23 (MDWYLKVLKNYVGFRGRARRKEY) are Periplasmic-facing. The chain crosses the membrane as a helical span at residues 24-44 (WMFILVNIIFTFVLGLLDKML). Residues 45–49 (GWQRA) lie on the Cytoplasmic side of the membrane. Residues 50–70 (GGEGILTTIYGILVFLPWWAV) traverse the membrane as a helical segment. At 71–80 (QFRRLHDTDR) the chain is on the periplasmic side. A helical transmembrane segment spans residues 81-101 (SAWWALLFLIPFIGWLIIIVF). Topologically, residues 102–121 (NCQAGTPGENRFGPDPKLEP) are cytoplasmic.

The protein to E.coli YhaI.

It is found in the cell inner membrane. The polypeptide is Inner membrane protein YhaH (yhaH) (Escherichia coli O157:H7).